The primary structure comprises 425 residues: Serine--tRNA ligase (425 aa).

Residue 231–233 (TAE) coordinates L-serine. 262 to 264 (RSE) is a binding site for ATP. Glu285 contributes to the L-serine binding site. 349-352 (EISS) is a binding site for ATP. Residue Ser385 participates in L-serine binding.

The protein belongs to the class-II aminoacyl-tRNA synthetase family. Type-1 seryl-tRNA synthetase subfamily. Homodimer. The tRNA molecule binds across the dimer.

It is found in the cytoplasm. It carries out the reaction tRNA(Ser) + L-serine + ATP = L-seryl-tRNA(Ser) + AMP + diphosphate + H(+). The catalysed reaction is tRNA(Sec) + L-serine + ATP = L-seryl-tRNA(Sec) + AMP + diphosphate + H(+). Its pathway is aminoacyl-tRNA biosynthesis; selenocysteinyl-tRNA(Sec) biosynthesis; L-seryl-tRNA(Sec) from L-serine and tRNA(Sec): step 1/1. In terms of biological role, catalyzes the attachment of serine to tRNA(Ser). Is also able to aminoacylate tRNA(Sec) with serine, to form the misacylated tRNA L-seryl-tRNA(Sec), which will be further converted into selenocysteinyl-tRNA(Sec). This is Serine--tRNA ligase from Bacillus licheniformis (strain ATCC 14580 / DSM 13 / JCM 2505 / CCUG 7422 / NBRC 12200 / NCIMB 9375 / NCTC 10341 / NRRL NRS-1264 / Gibson 46).